Reading from the N-terminus, the 300-residue chain is Cation-efflux pump FieF (300 aa).

A helical membrane pass occupies residues 24-44 (LLIKIFAWWYTGSVSILAALV). Asp-45 and Asp-49 together coordinate Zn(2+). The next 2 helical transmembrane spans lie at 82 to 102 (AALA…LTSI) and 114 to 134 (PGVG…LVTF). Zn(2+)-binding residues include His-153 and Asp-157. 2 consecutive transmembrane segments (helical) span residues 156 to 176 (SDVM…YGWH) and 178 to 198 (ADAL…LRMG).

The protein belongs to the cation diffusion facilitator (CDF) transporter (TC 2.A.4) family. FieF subfamily. As to quaternary structure, homodimer.

The protein localises to the cell inner membrane. It catalyses the reaction Zn(2+)(in) + H(+)(out) = Zn(2+)(out) + H(+)(in). The enzyme catalyses Cd(2+)(in) + H(+)(out) = Cd(2+)(out) + H(+)(in). The catalysed reaction is Fe(2+)(in) + H(+)(out) = Fe(2+)(out) + H(+)(in). In terms of biological role, divalent metal cation transporter which exports Zn(2+), Cd(2+) and possibly Fe(2+). May be involved in zinc and iron detoxification by efflux. In Salmonella choleraesuis (strain SC-B67), this protein is Cation-efflux pump FieF.